The primary structure comprises 367 residues: Small ribosomal subunit biogenesis GTPase RsgA (367 aa).

The CP-type G domain maps to 112–267; it reads AEQVLATNVD…VIDTPGLREL (156 aa). GTP is bound by residues 157–160 and 209–217; these read NKSD and GSSGAGKST. The Zn(2+) site is built by Cys291, Cys296, His298, and Cys304.

This sequence belongs to the TRAFAC class YlqF/YawG GTPase family. RsgA subfamily. Monomer. Associates with 30S ribosomal subunit, binds 16S rRNA. Requires Zn(2+) as cofactor.

It localises to the cytoplasm. In terms of biological role, one of several proteins that assist in the late maturation steps of the functional core of the 30S ribosomal subunit. Helps release RbfA from mature subunits. May play a role in the assembly of ribosomal proteins into the subunit. Circularly permuted GTPase that catalyzes slow GTP hydrolysis, GTPase activity is stimulated by the 30S ribosomal subunit. In Opitutus terrae (strain DSM 11246 / JCM 15787 / PB90-1), this protein is Small ribosomal subunit biogenesis GTPase RsgA.